The primary structure comprises 488 residues: Ribosomal protein uS12 methylthiotransferase RimO (488 aa).

The MTTase N-terminal domain occupies 4–120; the sequence is RKVHFVSLGC…LGRVLAGDAE (117 aa). The [4Fe-4S] cluster site is built by Cys-13, Cys-49, Cys-83, Cys-155, Cys-159, and Cys-162. The Radical SAM core domain occupies 141–377; sequence STPGGSAYVK…MTLQRRISHK (237 aa). In terms of domain architecture, TRAM spans 380-448; sequence AAMIGRELEV…DYDLVGELLD (69 aa).

Belongs to the methylthiotransferase family. RimO subfamily. [4Fe-4S] cluster serves as cofactor.

It localises to the cytoplasm. The enzyme catalyses L-aspartate(89)-[ribosomal protein uS12]-hydrogen + (sulfur carrier)-SH + AH2 + 2 S-adenosyl-L-methionine = 3-methylsulfanyl-L-aspartate(89)-[ribosomal protein uS12]-hydrogen + (sulfur carrier)-H + 5'-deoxyadenosine + L-methionine + A + S-adenosyl-L-homocysteine + 2 H(+). Its function is as follows. Catalyzes the methylthiolation of an aspartic acid residue of ribosomal protein uS12. The chain is Ribosomal protein uS12 methylthiotransferase RimO from Sorangium cellulosum (strain So ce56) (Polyangium cellulosum (strain So ce56)).